The chain runs to 80 residues: Large ribosomal subunit protein bL31B (80 aa).

It belongs to the bacterial ribosomal protein bL31 family. Type B subfamily. Part of the 50S ribosomal subunit.

This Xanthomonas axonopodis pv. citri (strain 306) protein is Large ribosomal subunit protein bL31B.